Here is a 1412-residue protein sequence, read N- to C-terminus: DNA-directed RNA polymerase subunit beta' (1412 aa).

Positions 70, 72, 85, and 88 each coordinate Zn(2+). Mg(2+) contacts are provided by Asp-460, Asp-462, and Asp-464. Zn(2+) contacts are provided by Cys-819, Cys-893, Cys-900, and Cys-903. A disordered region spans residues 1392-1412 (EEAFEFGTPSAPAEEPQHPAE).

It belongs to the RNA polymerase beta' chain family. As to quaternary structure, the RNAP catalytic core consists of 2 alpha, 1 beta, 1 beta' and 1 omega subunit. When a sigma factor is associated with the core the holoenzyme is formed, which can initiate transcription. The cofactor is Mg(2+). It depends on Zn(2+) as a cofactor.

It catalyses the reaction RNA(n) + a ribonucleoside 5'-triphosphate = RNA(n+1) + diphosphate. DNA-dependent RNA polymerase catalyzes the transcription of DNA into RNA using the four ribonucleoside triphosphates as substrates. This is DNA-directed RNA polymerase subunit beta' from Burkholderia mallei (strain NCTC 10247).